Here is a 211-residue protein sequence, read N- to C-terminus: Pyridoxine/pyridoxamine 5'-phosphate oxidase (211 aa).

Substrate-binding positions include 7–10 (RREY) and K65. FMN contacts are provided by residues 60-65 (RIVLLK), 75-76 (YT), R81, K82, and Q104. The substrate site is built by Y122, R126, and S130. FMN contacts are provided by residues 139-140 (QS) and W184. 190 to 192 (RLH) contacts substrate. R194 provides a ligand contact to FMN.

The protein belongs to the pyridoxamine 5'-phosphate oxidase family. Homodimer. FMN serves as cofactor.

It catalyses the reaction pyridoxamine 5'-phosphate + O2 + H2O = pyridoxal 5'-phosphate + H2O2 + NH4(+). The enzyme catalyses pyridoxine 5'-phosphate + O2 = pyridoxal 5'-phosphate + H2O2. It participates in cofactor metabolism; pyridoxal 5'-phosphate salvage; pyridoxal 5'-phosphate from pyridoxamine 5'-phosphate: step 1/1. Its pathway is cofactor metabolism; pyridoxal 5'-phosphate salvage; pyridoxal 5'-phosphate from pyridoxine 5'-phosphate: step 1/1. Catalyzes the oxidation of either pyridoxine 5'-phosphate (PNP) or pyridoxamine 5'-phosphate (PMP) into pyridoxal 5'-phosphate (PLP). This chain is Pyridoxine/pyridoxamine 5'-phosphate oxidase, found in Vibrio cholerae serotype O1 (strain ATCC 39541 / Classical Ogawa 395 / O395).